Reading from the N-terminus, the 213-residue chain is Thymidylate kinase (213 aa).

11–18 (GPEGAGKT) contacts ATP.

Belongs to the thymidylate kinase family.

It carries out the reaction dTMP + ATP = dTDP + ADP. In terms of biological role, phosphorylation of dTMP to form dTDP in both de novo and salvage pathways of dTTP synthesis. This Leuconostoc mesenteroides subsp. mesenteroides (strain ATCC 8293 / DSM 20343 / BCRC 11652 / CCM 1803 / JCM 6124 / NCDO 523 / NBRC 100496 / NCIMB 8023 / NCTC 12954 / NRRL B-1118 / 37Y) protein is Thymidylate kinase.